A 129-amino-acid chain; its full sequence is NADPH-dependent 7-cyano-7-deazaguanine reductase (129 aa).

Catalysis depends on cysteine 42, which acts as the Thioimide intermediate. The Proton donor role is filled by aspartate 49. Residues 64 to 66 (VEL) and 83 to 84 (HE) contribute to the substrate site.

Belongs to the GTP cyclohydrolase I family. QueF type 1 subfamily.

The protein localises to the cytoplasm. The enzyme catalyses 7-aminomethyl-7-carbaguanine + 2 NADP(+) = 7-cyano-7-deazaguanine + 2 NADPH + 3 H(+). Its pathway is tRNA modification; tRNA-queuosine biosynthesis. Catalyzes the NADPH-dependent reduction of 7-cyano-7-deazaguanine (preQ0) to 7-aminomethyl-7-deazaguanine (preQ1). This Synechococcus sp. (strain CC9605) protein is NADPH-dependent 7-cyano-7-deazaguanine reductase.